The sequence spans 549 residues: Tight junction-associated protein 1 (549 aa).

The tract at residues 1-34 is disordered; it reads MSSAAPAKKPYRKAPPEHRELRLEIPVSRLEQEE. Residues 14 to 23 show a composition bias toward basic and acidic residues; the sequence is APPEHRELRL. Residues 42-171 adopt a coiled-coil conformation; that stretch reads MKLLQQENEE…EELNERYRLD (130 aa). Disordered regions lie at residues 207–226 and 266–322; these read RSGQEVASPSPSPSSSLSPG and VDMS…PLYP. A Phosphoserine modification is found at serine 295. The span at 311–320 shows a compositional bias: pro residues; it reads YPTPSPPHPL. At threonine 313 the chain carries Phosphothreonine. Residues serine 315 and serine 340 each carry the phosphoserine modification. Disordered regions lie at residues 359 to 404, 410 to 429, and 434 to 549; these read EDGS…SEED, QRAFVDRTPPPAAVVQRTAF, and LPEL…TVLS. Positions 369-383 are enriched in polar residues; it reads SVPSSPASAQGSPHH. Positions 389–400 are enriched in low complexity; that stretch reads PSALSAPASSAS. Residue threonine 417 is modified to Phosphothreonine. Serine 483 carries the post-translational modification Phosphoserine. Over residues 485 to 498 the composition is skewed to basic and acidic residues; sequence EEERQSLLPDKEGT. Positions 522–534 are enriched in basic residues; the sequence is RSPKRMGVHHLHR. Phosphoserine is present on serine 537. Over residues 538 to 549 the composition is skewed to polar residues; the sequence is LTQAQEQGTVLS.

In terms of assembly, interacts with DLG1. Interacts with ARF6 (GTP-bound form). In terms of tissue distribution, widely expressed including in adult thymus, heart, lung, liver, small intestine, kidney, spleen, testis and skeletal muscle and in embryonic brain but not detected in adult brain (at protein level).

It localises to the golgi apparatus. The protein localises to the trans-Golgi network. Its subcellular location is the cell junction. The protein resides in the tight junction. It is found in the cell membrane. Its function is as follows. Plays a role in regulating the structure of the Golgi apparatus. This is Tight junction-associated protein 1 from Mus musculus (Mouse).